Reading from the N-terminus, the 138-residue chain is Peptide methionine sulfoxide reductase MsrB (138 aa).

The MsrB domain maps to 15-137 (EAEWRAQLDP…NSASLGFEPR (123 aa)). Zn(2+)-binding residues include Cys54, Cys57, Cys103, and Cys106. Cys126 functions as the Nucleophile in the catalytic mechanism.

Belongs to the MsrB Met sulfoxide reductase family. Zn(2+) is required as a cofactor.

It carries out the reaction L-methionyl-[protein] + [thioredoxin]-disulfide + H2O = L-methionyl-(R)-S-oxide-[protein] + [thioredoxin]-dithiol. The polypeptide is Peptide methionine sulfoxide reductase MsrB (Methylibium petroleiphilum (strain ATCC BAA-1232 / LMG 22953 / PM1)).